Reading from the N-terminus, the 174-residue chain is UPF0113 protein APE_0516.1 (174 aa).

It belongs to the UPF0113 family.

In Aeropyrum pernix (strain ATCC 700893 / DSM 11879 / JCM 9820 / NBRC 100138 / K1), this protein is UPF0113 protein APE_0516.1.